The following is a 494-amino-acid chain: 3-octaprenyl-4-hydroxybenzoate carboxy-lyase (494 aa).

Residue N172 coordinates Mn(2+). Prenylated FMN contacts are provided by residues 175–177 (IYR), 189–191 (RWL), and 194–195 (RG). E238 lines the Mn(2+) pocket. The active-site Proton donor is the D287.

Belongs to the UbiD family. Homohexamer. It depends on prenylated FMN as a cofactor. Mn(2+) is required as a cofactor.

The protein resides in the cell membrane. The catalysed reaction is a 4-hydroxy-3-(all-trans-polyprenyl)benzoate + H(+) = a 2-(all-trans-polyprenyl)phenol + CO2. Its pathway is cofactor biosynthesis; ubiquinone biosynthesis. Functionally, catalyzes the decarboxylation of 3-octaprenyl-4-hydroxy benzoate to 2-octaprenylphenol, an intermediate step in ubiquinone biosynthesis. The protein is 3-octaprenyl-4-hydroxybenzoate carboxy-lyase of Escherichia coli O9:H4 (strain HS).